Consider the following 73-residue polypeptide: Disintegrin mojastin-2 (73 aa).

Residues 1-73 (EAGEECDCGS…ADCPRNGLYG (73 aa)) enclose the Disintegrin domain. Cystine bridges form between cysteine 6–cysteine 21, cysteine 8–cysteine 16, cysteine 15–cysteine 38, cysteine 29–cysteine 35, cysteine 34–cysteine 59, and cysteine 47–cysteine 66. Residues 51–53 (RGD) carry the Cell attachment site motif.

Belongs to the venom metalloproteinase (M12B) family. P-II subfamily. P-IIa sub-subfamily. In terms of assembly, monomer (disintegrin). As to expression, expressed by the venom gland.

It is found in the secreted. Its function is as follows. Inhibits the three processes involved in platelet function (adhesion, activation and aggregation). It inhibits platelet adhesion to fibronectin with an IC(50) of 58.6 nM. It inhibits ATP release from platelet induced by ADP with an IC(50) of 19.5 nM on platelet-rich plasma, probably by binding to ADP receptors (P2RY1 and P2RY12). Finally, it inhibits ADP-induced platelet aggregation with IC(50) of 44.7 nM on platelet-rich plasma and 19.3 nM on whole blood, probably by binding to alpha-IIb/beta-3 (ITGA2B/ITGB3). Functionally, inhibits ADP-induced platelet aggregation (IC(50) = 13.8 nM) probably by binding to alpha-IIb/beta-3 (ITGA2B/ITGB3) located on the platelet surface. The sequence is that of Disintegrin mojastin-2 from Crotalus scutulatus scutulatus (Mojave rattlesnake).